A 2226-amino-acid polypeptide reads, in one-letter code: Histone-lysine N-methyltransferase ash1 (2226 aa).

The tract at residues 1–145 (MSCSQNETAA…SDSEDDLPLK (145 aa)) is disordered. Over residues 32 to 52 (ITDQSSQSKSIKSATQFSVQR) the composition is skewed to polar residues. Residues 99 to 111 (AVSKKVKVKRKKL) show a composition bias toward basic residues. Phosphoserine is present on residues serine 135, serine 136, and serine 138. Phosphothreonine is present on residues threonine 200 and threonine 201. Positions 260–269 (PRKRRGRPKK) are enriched in basic residues. Disordered regions lie at residues 260 to 324 (PRKR…IASS), 343 to 367 (RVLYPPPRSKRRQNNKKTACSSSNK), 673 to 695 (AQQLTLNGGGPASTLSKPLKRGL), 711 to 749 (SASASGTPNGSGSSNGNTKRRHKKSQSNDSSSPDDHKLP), and 811 to 832 (KRHLLEQPTSVSGAGSSASNSP). Residues 261-273 (RKRRGRPKKVVPT) constitute a DNA-binding region (a.T hook 1). Over residues 294–306 (STTSTTQSTTPSP) the composition is skewed to low complexity. Over residues 307 to 324 (KMQNENAVPTGSLPIASS) the composition is skewed to polar residues. A compositionally biased stretch (low complexity) spans 711 to 727 (SASASGTPNGSGSSNGN). A phosphoserine mark is found at serine 740, serine 831, and serine 977. Residues 820–831 (SVSGAGSSASNS) show a composition bias toward low complexity. Disordered regions lie at residues 980–1026 (QQTT…DCER) and 1049–1230 (SVVA…TTSL). The segment covering 989–999 (HEPEFDPDDEP) has biased composition (acidic residues). DNA-binding regions (a.T hook) lie at residues 1065-1077 (GRPRGRKPKNREQ) and 1095-1107 (AKKRGRQPKQPVL). Over residues 1108 to 1117 (EEPPPTPPPQ) the composition is skewed to pro residues. Positions 1186–1200 (AEAKRLDSIPTEHDP) are enriched in basic and acidic residues. The span at 1205-1219 (ESHNPGPQDYASCSE) shows a compositional bias: polar residues. One can recognise an AWS domain in the interval 1339-1387 (FDHPTCNCKNQGEKSCLDNCLNRMVYTECSPSNCPAGEKCRNQKIQRHA). The 117-residue stretch at 1390 to 1506 (PGVERFMTAD…EGEELTYDYN (117 aa)) folds into the SET domain. The Post-SET domain occupies 1514–1530 (EGQPCRCNTPQCRGVIG). 2 disordered regions span residues 1536–1575 (VKPLPAVEAKPSGEGLSGRNGRQRKQKAKKHAQRQAGKDI) and 1616–1648 (RASDAAATASSPALGTTNGDIPGRRPSTPSSPS). Basic residues predominate over residues 1556–1568 (GRQRKQKAKKHAQ). Low complexity-rich tracts occupy residues 1619 to 1628 (DAAATASSPA) and 1639 to 1648 (RRPSTPSSPS). The 109-residue stretch at 1681 to 1789 (KMAVVLRDIC…DSYEQQKIAS (109 aa)) folds into the Bromo domain. The tract at residues 1808-1839 (PKEVLSSEEEPGKIAVKKSPGAKERDSPIVPL) is disordered. A PHD-type zinc finger spans residues 1857–1903 (VIRCICGLYKDEGLMIQCSKCMVWQHTECTKADIDADNYQCERCEPR). The region spanning 1952–2072 (KVLPTKKHTY…KTARFFSKAK (121 aa)) is the BAH domain. Residues 2205–2226 (SGRGARQRKTQQSSSSSTANST) are disordered. The span at 2214-2226 (TQQSSSSSTANST) shows a compositional bias: low complexity.

The protein belongs to the class V-like SAM-binding methyltransferase superfamily. Histone-lysine methyltransferase family. SET2 subfamily. In terms of assembly, component of a large multiprotein complex distinct from complexes containing ash2 or brm. Interacts (via SET domain) with trx (via SET domain). Interacts with nej/cbp. Expressed throughout development but is present at higher levels during the embryonic and pupal stages than during the larval stages. During the larval stages it accumulates primarily in imaginal disks.

It is found in the nucleus. The protein resides in the chromosome. It catalyses the reaction L-lysyl(4)-[histone H3] + 3 S-adenosyl-L-methionine = N(6),N(6),N(6)-trimethyl-L-lysyl(4)-[histone H3] + 3 S-adenosyl-L-homocysteine + 3 H(+). In terms of biological role, trithorax group (TrxG) protein that has histone methyltransferase activity. Specifically trimethylates 'Lys-4' of histone H3 (H3K4me3), a specific tag for epigenetic transcriptional activation. TrxG proteins are generally required to maintain the transcriptionally active state of homeotic genes throughout development. Does not act as a coactivator required for transcriptional activation, but specifically prevents inappropriate Polycomb Group (PcG) silencing of homeotic genes in cells in which they must stay transcriptionally active. This chain is Histone-lysine N-methyltransferase ash1 (ash1), found in Drosophila melanogaster (Fruit fly).